The following is a 223-amino-acid chain: Urease accessory protein UreF (223 aa).

The protein belongs to the UreF family. As to quaternary structure, ureD, UreF and UreG form a complex that acts as a GTP-hydrolysis-dependent molecular chaperone, activating the urease apoprotein by helping to assemble the nickel containing metallocenter of UreC. The UreE protein probably delivers the nickel.

Its subcellular location is the cytoplasm. Required for maturation of urease via the functional incorporation of the urease nickel metallocenter. This is Urease accessory protein UreF from Rhizobium etli (strain CIAT 652).